We begin with the raw amino-acid sequence, 213 residues long: Glycerol-3-phosphate acyltransferase (213 aa).

The next 5 membrane-spanning stretches (helical) occupy residues 3-23 (LLLF…LWIG), 68-88 (ILLP…GFFA), 112-132 (VLLG…VLVL), 134-154 (LFSM…LSVL), and 163-183 (LPNY…IIII).

Belongs to the PlsY family. As to quaternary structure, probably interacts with PlsX.

The protein localises to the cell membrane. The catalysed reaction is an acyl phosphate + sn-glycerol 3-phosphate = a 1-acyl-sn-glycero-3-phosphate + phosphate. It functions in the pathway lipid metabolism; phospholipid metabolism. Catalyzes the transfer of an acyl group from acyl-phosphate (acyl-PO(4)) to glycerol-3-phosphate (G3P) to form lysophosphatidic acid (LPA). This enzyme utilizes acyl-phosphate as fatty acyl donor, but not acyl-CoA or acyl-ACP. This is Glycerol-3-phosphate acyltransferase from Streptococcus pyogenes serotype M28 (strain MGAS6180).